Consider the following 663-residue polypeptide: DNA topoisomerase 4 subunit B (663 aa).

ATP contacts are provided by residues Y7, N47, D74, 114-120 (GLHGVGA), and K341. Positions 386–416 (REAARKAREDARSGKKNKRKDTLLSGKLTPA) are disordered. The span at 387–398 (EAARKAREDARS) shows a compositional bias: basic and acidic residues. A Toprim domain is found at 424-538 (NELYLVEGDS…AGRVFIALPP (115 aa)). 3 residues coordinate Mg(2+): E430, D503, and D505.

This sequence belongs to the type II topoisomerase family. ParE type 2 subfamily. As to quaternary structure, heterotetramer composed of ParC and ParE. It depends on Mg(2+) as a cofactor. Requires Mn(2+) as cofactor. The cofactor is Ca(2+).

It carries out the reaction ATP-dependent breakage, passage and rejoining of double-stranded DNA.. In terms of biological role, topoisomerase IV is essential for chromosome segregation. It relaxes supercoiled DNA. Performs the decatenation events required during the replication of a circular DNA molecule. This chain is DNA topoisomerase 4 subunit B, found in Staphylococcus aureus (strain NCTC 8325 / PS 47).